A 171-amino-acid chain; its full sequence is Protein TIFY 11d (171 aa).

The region spanning 65-100 (PSAGTAPLTIFYDGRMVVVDDVPAEKAAELMRLAGS) is the Tify domain. A Jas motif is present at residues 117–142 (PIARKASLQRFLQKRKHRITTTSEPY). The short motif at 119 to 126 (ARKASLQR) is the Nuclear localization signal element.

Belongs to the TIFY/JAZ family. As to quaternary structure, interacts with BHLH148 and COI1A. Interacts with COI1A, COI1B and COI2 in a coronatine-dependent manner. Coronatine is an analog of jasmonoyl isoleucine (JA-Ile). Ubiquitinated. Increase in jasmonoyl isoleucine (JA-Ile) levels mediates its degradation via COI1A-mediated proteasome pathway.

It localises to the nucleus. In terms of biological role, repressor of jasmonate (JA) responses. May act on an initial response of JA-regulated gene expression toward drought tolerance as part of a BHLH148-TIFY11D/JAZ12-COI1A complex. The sequence is that of Protein TIFY 11d from Oryza sativa subsp. indica (Rice).